We begin with the raw amino-acid sequence, 37 residues long: Cytochrome b6-f complex subunit 5 (37 aa).

A helical membrane pass occupies residues 5 to 25 (FLFGIVLGLIPITLAGLFVTA).

The protein belongs to the PetG family. As to quaternary structure, the 4 large subunits of the cytochrome b6-f complex are cytochrome b6, subunit IV (17 kDa polypeptide, PetD), cytochrome f and the Rieske protein, while the 4 small subunits are PetG, PetL, PetM and PetN. The complex functions as a dimer.

The protein localises to the plastid. Its subcellular location is the chloroplast thylakoid membrane. In terms of biological role, component of the cytochrome b6-f complex, which mediates electron transfer between photosystem II (PSII) and photosystem I (PSI), cyclic electron flow around PSI, and state transitions. PetG is required for either the stability or assembly of the cytochrome b6-f complex. The chain is Cytochrome b6-f complex subunit 5 from Capsella bursa-pastoris (Shepherd's purse).